Here is a 433-residue protein sequence, read N- to C-terminus: Enolase (433 aa).

Glutamine 163 contributes to the (2R)-2-phosphoglycerate binding site. The active-site Proton donor is glutamate 205. Positions 242, 286, and 313 each coordinate Mg(2+). (2R)-2-phosphoglycerate-binding residues include lysine 338, arginine 367, serine 368, and lysine 389. Catalysis depends on lysine 338, which acts as the Proton acceptor.

Belongs to the enolase family. The cofactor is Mg(2+).

It is found in the cytoplasm. The protein localises to the secreted. The protein resides in the cell surface. It catalyses the reaction (2R)-2-phosphoglycerate = phosphoenolpyruvate + H2O. It participates in carbohydrate degradation; glycolysis; pyruvate from D-glyceraldehyde 3-phosphate: step 4/5. In terms of biological role, catalyzes the reversible conversion of 2-phosphoglycerate (2-PG) into phosphoenolpyruvate (PEP). It is essential for the degradation of carbohydrates via glycolysis. The chain is Enolase from Koribacter versatilis (strain Ellin345).